The primary structure comprises 157 residues: MATLLCDLQERSAKVERARHWDSKQGSSNSDVASGGSEVAGNSGNNSYLGDDVGWKIYPYRFLQLLQHLEQLQFTIQAPRHARLGISTVRMWSLRPYYNYDSYLEKDLIQPDVPHDSLIWALLRYVGRAVDRWVSRTFQPPRIRPLHANDPPAEASL.

The disordered stretch occupies residues R17–S43.

Its pathway is mycotoxin biosynthesis. Part of the gene clusters that mediate the biosynthesis of AM-toxins, host-selective toxins (HSTs) causing Alternaria blotch on apple, a worldwide distributed disease. AM-toxins are cyclic depsipeptides containing the 3 residues 2-hydroxy-isovaleric acid (2-HIV), dehydroalanine, L-alanine which are common for all 3 AM-toxins I to III. The fourth precursor is L-alpha-amino-methoxyphenyl-valeric acid (L-Amv) for AM-toxin I, L-alpha-amino-phenyl-valeric acid (L-Apv) for AM-toxin II, and L-alpha-amino-hydroxyphenyl-valeric acid (L-Ahv) for AM-toxin III. AM-toxins have two target sites for affecting susceptible apple cells; they cause invagination of the plasma membrane and electrolyte loss and chloroplast disorganization. The non-ribosomal peptide synthetase AMT1 contains 4 catalytic modules and is responsible for activation of each residue in AM-toxin. The aldo-keto reductase AMT2 catalyzes the conversion of 2-keto-isovaleric acid (2-KIV) to 2-hydroxy-isovaleric acid (2-HIV), one of the precursor residues incorporated by AMT1 during AM-toxin biosynthesis, by reduction of its ketone to an alcohol. The cytochrome P450 monooxygenase AMT3 and the thioesterase AMT4 are also important for AM-toxin production, but their exact function within the AM-toxin biosynthesis are not known yet. Up to 21 proteins (including AMT1 to AMT4) are predicted to be involved in AM-toxin biosynthesis since their expression ishighly up-regulated in AM-toxin-producing cultures. This is AM-toxin biosynthesis protein 15 from Alternaria alternata (Alternaria rot fungus).